The chain runs to 872 residues: Translation initiation factor IF-2 (872 aa).

Positions 130-155 are enriched in basic and acidic residues; sequence AEEEAARAAEEEAARLAEEEAARRAA. The disordered stretch occupies residues 130-282; it reads AEEEAARAAE…RERERLKHMQ (153 aa). The span at 156-181 shows a compositional bias: low complexity; it reads EPQSEPEAAAPAAEPVAPTAPVAAAP. Over residues 182-194 the composition is skewed to pro residues; that stretch reads APAPATPVAPAQP. The span at 195–211 shows a compositional bias: low complexity; sequence KPVAAAAPAGDATAVPR. A compositionally biased stretch (basic and acidic residues) spans 271–282; it reads RARERERLKHMQ. The tr-type G domain maps to 371–539; it reads TRPPVVTVMG…AILLQAEILD (169 aa). The interval 380 to 387 is G1; that stretch reads GHVDHGKT. A GTP-binding site is contributed by 380–387; sequence GHVDHGKT. Residues 405 to 409 form a G2 region; the sequence is GITQH. A G3 region spans residues 427–430; sequence DTPG. Residues 427 to 431 and 481 to 484 contribute to the GTP site; these read DTPGH and NKID. The interval 481–484 is G4; sequence NKID. Positions 517–519 are G5; that stretch reads SAK.

It belongs to the TRAFAC class translation factor GTPase superfamily. Classic translation factor GTPase family. IF-2 subfamily.

The protein resides in the cytoplasm. One of the essential components for the initiation of protein synthesis. Protects formylmethionyl-tRNA from spontaneous hydrolysis and promotes its binding to the 30S ribosomal subunits. Also involved in the hydrolysis of GTP during the formation of the 70S ribosomal complex. The protein is Translation initiation factor IF-2 of Paramagnetospirillum magneticum (strain ATCC 700264 / AMB-1) (Magnetospirillum magneticum).